Consider the following 941-residue polypeptide: Putative helicase 121R (941 aa).

Residues 285–323 adopt a coiled-coil conformation; sequence LKQELKDIEGENSETIKRNLKDAKDLLKILNKKRANEYN. Positions 492-514 are disordered; it reads DDSGRDSEEDSQEEEVSSSQEQL. Residues 498–507 are compositionally biased toward acidic residues; that stretch reads SEEDSQEEEV. One can recognise an SF3 helicase domain in the interval 609-791; it reads EEVLELYNFL…FVAREKCPET (183 aa). 653–660 is an ATP binding site; sequence GNGNNGKS.

This sequence belongs to the IIV-6 184L family.

The protein is Putative helicase 121R of Invertebrate iridescent virus 3 (IIV-3).